A 372-amino-acid chain; its full sequence is L-lysine 4-hydroxylase (372 aa).

Residues histidine 176, glutamate 178, and histidine 312 each contribute to the Fe cation site.

The protein belongs to the clavaminate synthase family. Requires Fe(2+) as cofactor.

The catalysed reaction is L-lysine + 2-oxoglutarate + O2 = (4R)-4-hydroxy-L-lysine + succinate + CO2. Alpha-ketoglutarate-dependent dioxygenase that in vitro catalyzes the regio- and stereoselective hydroxylation of L-lysine, leading to (4R)-4-hydroxy-L-lysine. The polypeptide is L-lysine 4-hydroxylase (Flavobacterium sp. (strain CF136)).